Here is a 261-residue protein sequence, read N- to C-terminus: Cytochrome c oxidase subunit 3 (261 aa).

Over 1–15 the chain is Mitochondrial matrix; it reads MTHQTHAYHMVNPSP. Residues 16 to 34 traverse the membrane as a helical segment; that stretch reads WPLTGAMSALLLTSGLIMW. Residues 35 to 40 are Mitochondrial intermembrane-facing; sequence FHFNSY. The chain crosses the membrane as a helical span at residues 41–66; sequence TLLLLGLLTNLISSYQWWRDIVREGT. Over 67–72 the chain is Mitochondrial matrix; sequence YQGHHT. The helical transmembrane segment at 73-105 threads the bilayer; it reads KIVQKGLRYGMILFIISEVFFFLGFFWAFYHSS. Topologically, residues 106-128 are mitochondrial intermembrane; that stretch reads LAPTPELGGCWPPTGISPLNPLE. Residues 129-152 traverse the membrane as a helical segment; sequence VPLLNTSILLASGVSITWAHHSLM. Over 153 to 155 the chain is Mitochondrial matrix; the sequence is EGN. The chain crosses the membrane as a helical span at residues 156–183; sequence RKQMLQALTITIALGLYFTALQAMEYYE. The Mitochondrial intermembrane segment spans residues 184-190; it reads ASFTISD. Residues 191-223 form a helical membrane-spanning segment; sequence GVYGSTFFVATGFHGLHVIIGTTFLITCLVRQT. The Mitochondrial matrix segment spans residues 224-232; the sequence is LYHFTSNHH. The helical transmembrane segment at 233-256 threads the bilayer; it reads FGFEAAAWYWHFVDVVWLFLYVSI. Residues 257–261 are Mitochondrial intermembrane-facing; sequence YWWGS.

It belongs to the cytochrome c oxidase subunit 3 family. Component of the cytochrome c oxidase (complex IV, CIV), a multisubunit enzyme composed of 14 subunits. The complex is composed of a catalytic core of 3 subunits MT-CO1, MT-CO2 and MT-CO3, encoded in the mitochondrial DNA, and 11 supernumerary subunits COX4I, COX5A, COX5B, COX6A, COX6B, COX6C, COX7A, COX7B, COX7C, COX8 and NDUFA4, which are encoded in the nuclear genome. The complex exists as a monomer or a dimer and forms supercomplexes (SCs) in the inner mitochondrial membrane with NADH-ubiquinone oxidoreductase (complex I, CI) and ubiquinol-cytochrome c oxidoreductase (cytochrome b-c1 complex, complex III, CIII), resulting in different assemblies (supercomplex SCI(1)III(2)IV(1) and megacomplex MCI(2)III(2)IV(2)).

Its subcellular location is the mitochondrion inner membrane. It catalyses the reaction 4 Fe(II)-[cytochrome c] + O2 + 8 H(+)(in) = 4 Fe(III)-[cytochrome c] + 2 H2O + 4 H(+)(out). In terms of biological role, component of the cytochrome c oxidase, the last enzyme in the mitochondrial electron transport chain which drives oxidative phosphorylation. The respiratory chain contains 3 multisubunit complexes succinate dehydrogenase (complex II, CII), ubiquinol-cytochrome c oxidoreductase (cytochrome b-c1 complex, complex III, CIII) and cytochrome c oxidase (complex IV, CIV), that cooperate to transfer electrons derived from NADH and succinate to molecular oxygen, creating an electrochemical gradient over the inner membrane that drives transmembrane transport and the ATP synthase. Cytochrome c oxidase is the component of the respiratory chain that catalyzes the reduction of oxygen to water. Electrons originating from reduced cytochrome c in the intermembrane space (IMS) are transferred via the dinuclear copper A center (CU(A)) of subunit 2 and heme A of subunit 1 to the active site in subunit 1, a binuclear center (BNC) formed by heme A3 and copper B (CU(B)). The BNC reduces molecular oxygen to 2 water molecules using 4 electrons from cytochrome c in the IMS and 4 protons from the mitochondrial matrix. In Ornithorhynchus anatinus (Duckbill platypus), this protein is Cytochrome c oxidase subunit 3 (MT-CO3).